The following is a 347-amino-acid chain: Dolichyl-diphosphooligosaccharide--protein glycosyltransferase subunit TUSC3 (347 aa).

The first 41 residues, 1 to 41 (MGARGAPSRRRQAGRRPRYLPTGSFPFLLLLLLLCIQLGGG), serve as a signal peptide directing secretion. Residues 42–196 (QKKKENLLAE…DVHIRVFRPP (155 aa)) are Lumenal-facing. In terms of domain architecture, Thioredoxin spans 59 to 187 (WSSRRSVFRM…LAKWIADRTD (129 aa)). Residue asparagine 83 is glycosylated (N-linked (GlcNAc...) asparagine). A disulfide bridge links cysteine 99 with cysteine 102. A helical membrane pass occupies residues 197-217 (NYSGTIALALLVSLVGGLLYL). At 218–221 (RRNN) the chain is on the cytoplasmic side. A helical transmembrane segment spans residues 222–242 (LEFIYNKTGWAMVSLCIVFAM). At 243–276 (TSGQMWNHIRGPPYAHKNPHNGQVSYIHGSSQVQ) the chain is on the lumenal side. Residues 277–297 (FVAESHIILVLNAAITMGMDL) traverse the membrane as a helical segment. Residues 298 to 312 (LNEAATSKGDVGKRR) are Cytoplasmic-facing. Residues 313–333 (IICLVGLGLVVFFFSFLLSIF) traverse the membrane as a helical segment. Over 334–347 (RSKYHGYPYSFLIK) the chain is Lumenal.

Belongs to the OST3/OST6 family. Accessory component of the STT3B-containing form of the oligosaccharyltransferase (OST) complex. OST exists in two different complex forms which contain common core subunits RPN1, RPN2, OST48, OST4, DAD1 and TMEM258, either STT3A or STT3B as catalytic subunits, and form-specific accessory subunits. OST can form stable complexes with the Sec61 complex or with both the Sec61 and TRAP complexes. The association of TUSC3 or MAGT1 with the STT3B-containing complex seems to be mutually exclusvice.

Its subcellular location is the endoplasmic reticulum membrane. The protein operates within protein modification; protein glycosylation. Its function is as follows. Acts as accessory component of the N-oligosaccharyl transferase (OST) complex which catalyzes the transfer of a high mannose oligosaccharide from a lipid-linked oligosaccharide donor to an asparagine residue within an Asn-X-Ser/Thr consensus motif in nascent polypeptide chains. Involved in N-glycosylation of STT3B-dependent substrates. Specifically required for the glycosylation of a subset of acceptor sites that are near cysteine residues; in this function seems to act redundantly with MAGT1. In its oxidized form proposed to form transient mixed disulfides with a glycoprotein substrate to facilitate access of STT3B to the unmodified acceptor site. Also has oxidoreductase-independent functions in the STT3B-containing OST complex possibly involving substrate recognition. Could indirectly play a role in Mg(2+) transport. The sequence is that of Dolichyl-diphosphooligosaccharide--protein glycosyltransferase subunit TUSC3 (TUSC3) from Bos taurus (Bovine).